We begin with the raw amino-acid sequence, 181 residues long: MMLQHPGQVSASEVSATAIVPCLSPPGSLVFEDFANLTPFVKEELRFAIQNKHLCHRMSSALESVTVNNRPLEMSVTKSEAAPEEDERKRRRRERNKIAAAKCRNKKKEKTECLQKESEKLESVNAELKAQIEELKNEKQHLIYMLNLHRPTCIVRAQNGRTPEDERNLFIQQIKEGTLQS.

Residues 73–97 (EMSVTKSEAAPEEDERKRRRRERNK) form a disordered region. Lysine 78 is covalently cross-linked (Glycyl lysine isopeptide (Lys-Gly) (interchain with G-Cter in SUMO2)). The region spanning 86-149 (DERKRRRRER…QHLIYMLNLH (64 aa)) is the bZIP domain. Positions 88-110 (RKRRRRERNKIAAAKCRNKKKEK) are basic motif. Residues 114 to 142 (LQKESEKLESVNAELKAQIEELKNEKQHL) are leucine-zipper. Threonine 162 is modified (phosphothreonine). Residue lysine 175 forms a Glycyl lysine isopeptide (Lys-Gly) (interchain with G-Cter in SUMO2) linkage.

The protein belongs to the bZIP family. ATF subfamily. Binds DNA as a homodimer or a heterodimer. Interacts with KAT5; promoting KAT5 autoacetylation and KAT5 deubiquitination by USP7.

Its subcellular location is the nucleus. This protein binds the cAMP response element (CRE) (consensus: 5'-GTGACGT[AC][AG]-3'), a sequence present in many viral and cellular promoters. Represses transcription from promoters with ATF sites. It may repress transcription by stabilizing the binding of inhibitory cofactors at the promoter. This chain is Cyclic AMP-dependent transcription factor ATF-3, found in Mus musculus (Mouse).